A 2697-amino-acid polypeptide reads, in one-letter code: Target of rapamycin homolog (2697 aa).

The tract at residues 1–25 (MLQQHGISFQMNADRQNKAATTSNR) is disordered. HEAT repeat units lie at residues 235–272 (LRVNLFFKYIFNAVRDKNPAVRIAGIDALHVVLTIVSQ), 649–687 (QTIYGVLRAVCSVIVNDQDVRVRMQVISCFGQMPRPFLA), 689–726 (LAQPEMLEVQFMALHDEKLEMQQACVTLLGRLAELNPA), 731–768 (RLRLMLLETLSQMQQSGQARLEQHSAKMIAQLAKQSPK), 815–853 (KNLKPLFEKLTHMINDSSSLHKREAALRAIGGICRSTAY), 863–900 (SLLDDLLRILKTVMSNTMRREAIKTLGILGAIDPYTHK), and 1073–1110 (KYTGELIPYLLTVLQTDKTKERVLTVKVMESIQKLTHC). The FAT domain occupies 1438–2153 (VLGRWAEQTK…IYALTVASRS (716 aa)). Disordered stretches follow at residues 1945–1981 (TVISPPQQPQQPKKMHIPPVTRATSPPPPAQKSPQPA) and 2017–2039 (SNSSLPPQHHHVSPLSNDSPSNS). The span at 1969 to 1981 (SPPPPAQKSPQPA) shows a compositional bias: pro residues. The segment covering 2030–2039 (PLSNDSPSNS) has biased composition (polar residues). In terms of domain architecture, PI3K/PI4K catalytic spans 2332-2647 (FSSKMNVITS…TTDSIMETIK (316 aa)). Residues 2338–2344 (VITSKQR) form a G-loop region. The tract at residues 2512-2520 (GLGDRHPSN) is catalytic loop. The interval 2532 to 2557 (HIDFGDCFEVAMLREKFPERVPFRLT) is activation loop. The tract at residues 2615 to 2635 (DPKTRKDTGGRQNMAGAVLPS) is disordered. Positions 2665 to 2697 (EPLQVTEQLAMLTEQATSPLNLCQSYIGWCPFW) constitute an FATC domain.

Belongs to the PI3/PI4-kinase family. As to expression, ubiquitous. Expressed in all major tissues and organs, including the intestine, gonads and hypodermal cells. Expressed in neurons.

Its subcellular location is the nucleus. It carries out the reaction L-seryl-[protein] + ATP = O-phospho-L-seryl-[protein] + ADP + H(+). It catalyses the reaction L-threonyl-[protein] + ATP = O-phospho-L-threonyl-[protein] + ADP + H(+). Serine/threonine-protein kinase that regulates the mRNA translation machinery, probably by modulating the activity of translation factors such as eIF-4G and eIF-2. It may have some protein kinase activity instead of lipid kinase activity. May play a role in P-granule degradation by autophagy in somatic cells during embryogenesis. Required, during larval development, for the establishment of the proper number of germline progenitors, probably upstream of rsks-1 and ife-1. Required for larval development. May act as a mediator of lifespan regulation by insulin signaling and nutrient sensing. This chain is Target of rapamycin homolog, found in Caenorhabditis elegans.